The primary structure comprises 131 residues: MAAARKTNTRKRRVKKNIESGIAHIRSTFNNTIVTITDVHGNALSWSSAGALGFKGSKKSTPFAAQMAAETAAKGSIEHGLKTLEVTVKGPGSGREAAIRALQAAGLEVTAIRDVTPVPHNGCRPPKRRRV.

The protein belongs to the universal ribosomal protein uS11 family. As to quaternary structure, part of the 30S ribosomal subunit. Interacts with proteins S7 and S18. Binds to IF-3.

Located on the platform of the 30S subunit, it bridges several disparate RNA helices of the 16S rRNA. Forms part of the Shine-Dalgarno cleft in the 70S ribosome. The protein is Small ribosomal subunit protein uS11 of Bacillus licheniformis (strain ATCC 14580 / DSM 13 / JCM 2505 / CCUG 7422 / NBRC 12200 / NCIMB 9375 / NCTC 10341 / NRRL NRS-1264 / Gibson 46).